A 189-amino-acid polypeptide reads, in one-letter code: MSAVMIAVVLLGLLALVFGAILGFAAVKFRVEGDPLVDQVESLLPQTQCGQCGYPGCRPYAEAIAGGDQINKCPPGGTATMEKIAELMGVEPQPLSATTEQQVKKVAYIREDECIGCTKCIQACPVDAIVGAGKLMHTVITQDCTGCDLCVEPCPVDCIDMLPVTQDIKTWNWKLSAIPVMQLEEDKQC.

A hydrophobic region spans residues 1–26 (MSAVMIAVVLLGLLALVFGAILGFAA). Residues 32 to 90 (EGDPLVDQVESLLPQTQCGQCGYPGCRPYAEAIAGGDQINKCPPGGTATMEKIAELMGV) form the 4Fe-4S domain. The [4Fe-4S] cluster site is built by cysteine 49, cysteine 52, cysteine 57, cysteine 73, cysteine 114, cysteine 117, cysteine 120, cysteine 124, cysteine 144, cysteine 147, cysteine 150, and cysteine 154. 4Fe-4S ferredoxin-type domains are found at residues 105-134 (KVAY…GAGK) and 136-164 (MHTV…MLPV).

The protein belongs to the 4Fe4S bacterial-type ferredoxin family. RnfB subfamily. The complex is composed of six subunits: RnfA, RnfB, RnfC, RnfD, RnfE and RnfG. [4Fe-4S] cluster serves as cofactor.

Its subcellular location is the cell inner membrane. Part of a membrane-bound complex that couples electron transfer with translocation of ions across the membrane. The protein is Ion-translocating oxidoreductase complex subunit B of Shewanella amazonensis (strain ATCC BAA-1098 / SB2B).